We begin with the raw amino-acid sequence, 614 residues long: Vitamin B12 transporter BtuB (614 aa).

A signal peptide spans 1–20 (MIKKASLLTACSVTAFSAWA). The short motif at 26–33 (DTLVVTAN) is the TonB box element. The 115-residue stretch at 38-152 (PRSTVLAPTT…IGGVVNIITT (115 aa)) folds into the TBDR plug domain. Residues Leu83, Ser85, Asn92, and 110 to 111 (GS) contribute to the cyanocob(III)alamin site. In terms of domain architecture, TBDR beta-barrel spans 155–614 (EPGTEISAGW…EYTLSGSYTF (460 aa)). Transmembrane regions (beta stranded) follow at residues 158-165 (TEISAGWG), 169-178 (YQNYDVSTQQ), and 184-195 (TRVTLLGDYAHT). Positions 199, 211, 213, and 215 each coordinate Ca(2+). The next 2 membrane-spanning stretches (beta stranded) occupy residues 217–227 (FLSKTLYGALE) and 232–248 (DAWSGFVRGYGYDNRTN). Residues Tyr249 and Asp250 each contribute to the Ca(2+) site. Residue Ala251 coordinates cyanocob(III)alamin. Position 261 (Asp261) interacts with Ca(2+). The next 14 beta stranded transmembrane spans lie at 263-277 (RKLYSQSWDAGLRYN), 279-296 (ELIKSQLITSYSHSKDYN), 309-325 (TLDEMKQYTVQWANNII), 328-337 (HGNVGAGVDW), 353-369 (YDQRNTGIYLTGLQQVG), 371-381 (FTFEGAARSDD), 385-400 (FGRHGTWQTSAGWEFI), 403-417 (YRFIASYGTSYKAPN), 434-443 (KSKQWEGAFE), 449-458 (VNWRISGYRN), 473-490 (YYNEGKARIKGVEATANF), 494-509 (PLTHTVSYDYVDARNA), 517-529 (RRAKQQVKYQLDW), and 535-550 (DWGITYQYLGTRYDKD). Residue Thr309 coordinates cyanocob(III)alamin. Arg517 lines the cyanocob(III)alamin pocket. Tyr551 is a cyanocob(III)alamin binding site. The next 3 membrane-spanning stretches (beta stranded) occupy residues 558-572 (TVKMGGVSLWDLAVA), 585-596 (IANLFDKDYETV), and 602-614 (AGREYTLSGSYTF). The short motif at 597 to 614 (YGYQTAGREYTLSGSYTF) is the TonB C-terminal box element.

It belongs to the TonB-dependent receptor family. BtuB (TC 1.B.14.3.1) subfamily.

Its subcellular location is the cell outer membrane. Involved in the active translocation of vitamin B12 (cyanocobalamin) across the outer membrane to the periplasmic space. It derives its energy for transport by interacting with the trans-periplasmic membrane protein TonB. The chain is Vitamin B12 transporter BtuB from Escherichia coli O157:H7.